Here is a 759-residue protein sequence, read N- to C-terminus: Zinc finger protein 287 (759 aa).

The SCAN box domain occupies 42 to 124; the sequence is RRNFRNFPYP…ALVEDLTQIL (83 aa). A disordered region spans residues 127–154; sequence EEAPQSSALPQDTPEDDPNHDPNPASQA. Residues 166 to 234 form the KRAB domain; that stretch reads VTFNDVAVDI…IKEIVEGPNP (69 aa). 14 C2H2-type zinc fingers span residues 366–388, 394–416, 422–444, 450–472, 478–500, 506–528, 534–556, 562–584, 590–612, 618–640, 646–668, 674–696, 702–724, and 730–752; these read YSCNVCGKQFRKYPSLLAHRENH, YECEECGKEFKHLSSLIAHQRMH, YECHQCGKAFSQRAHLTIHQRIH, YKCEDCGKDFSQRAHLTIHQRTH, YKCLECSKTFSHSSSLINHQRVH, YICNECGKTFSQSTHLLQHQKIH, YKCNECWKVFSQSTYLIRHQRIH, YKCTACGKAFAHSSTLIQHQTTH, YICNVCGKAFSQSANLTQHHRTH, YKCSVCGKAFSQSVHLTQHQRIH, FKCNTCGKAYRQGANLTQHQRVH, YKCHHCGKAFIYSSSLNQHRRTH, YKCSHCNKDFSQRTCLIQHQRIH, and YGCRICGKAFTQSTNLIQHQRVH.

The protein belongs to the krueppel C2H2-type zinc-finger protein family. In terms of tissue distribution, expressed in brain and at low levels in kidney and spleen and few hematopoietic cell lines.

The protein resides in the nucleus. Its function is as follows. May be involved in transcriptional regulation. The polypeptide is Zinc finger protein 287 (Mus musculus (Mouse)).